The sequence spans 190 residues: ATP synthase subunit C lysine N-methyltransferase (190 aa).

This sequence belongs to the ANT/ATPSC lysine N-methyltransferase family.

It localises to the mitochondrion. The enzyme catalyses L-lysyl-[protein] + 3 S-adenosyl-L-methionine = N(6),N(6),N(6)-trimethyl-L-lysyl-[protein] + 3 S-adenosyl-L-homocysteine + 3 H(+). Its function is as follows. Mitochondrial protein-lysine N-methyltransferase that trimethylates ATP synthase subunit C. Trimethylation is required for proper incorporation of the C subunit into the ATP synthase complex and mitochondrial respiration. This Caenorhabditis elegans protein is ATP synthase subunit C lysine N-methyltransferase.